A 357-amino-acid polypeptide reads, in one-letter code: tRNA N6-adenosine threonylcarbamoyltransferase (357 aa).

2 residues coordinate Fe cation: His-120 and His-124. Substrate-binding positions include 143 to 147, Asp-176, Gly-189, and Asn-289; that span reads LVSGG. Asp-317 is a Fe cation binding site.

Belongs to the KAE1 / TsaD family. Requires Fe(2+) as cofactor.

Its subcellular location is the cytoplasm. It catalyses the reaction L-threonylcarbamoyladenylate + adenosine(37) in tRNA = N(6)-L-threonylcarbamoyladenosine(37) in tRNA + AMP + H(+). Required for the formation of a threonylcarbamoyl group on adenosine at position 37 (t(6)A37) in tRNAs that read codons beginning with adenine. Is involved in the transfer of the threonylcarbamoyl moiety of threonylcarbamoyl-AMP (TC-AMP) to the N6 group of A37, together with TsaE and TsaB. TsaD likely plays a direct catalytic role in this reaction. The polypeptide is tRNA N6-adenosine threonylcarbamoyltransferase (Polynucleobacter asymbioticus (strain DSM 18221 / CIP 109841 / QLW-P1DMWA-1) (Polynucleobacter necessarius subsp. asymbioticus)).